We begin with the raw amino-acid sequence, 1155 residues long: DNA-directed RNA polymerase subunit beta (1155 aa).

The protein belongs to the RNA polymerase beta chain family. The RNAP catalytic core consists of 2 alpha, 1 beta, 1 beta' and 1 omega subunit. When a sigma factor is associated with the core the holoenzyme is formed, which can initiate transcription.

It carries out the reaction RNA(n) + a ribonucleoside 5'-triphosphate = RNA(n+1) + diphosphate. Its function is as follows. DNA-dependent RNA polymerase catalyzes the transcription of DNA into RNA using the four ribonucleoside triphosphates as substrates. In Borrelia hermsii (strain HS1 / DAH), this protein is DNA-directed RNA polymerase subunit beta.